We begin with the raw amino-acid sequence, 84 residues long: Exendin-2-long (84 aa).

Positions 1-23 are cleaved as a signal peptide; that stretch reads MKSILWLCVFGLLIATLFPVSWQ. Residues 24-44 constitute a propeptide that is removed on maturation; that stretch reads MAIKSRLSSEDSETDQRLFES.

The protein belongs to the glucagon family. An amidated Pro-81 is described. Such an amidation is however not compatible with the sequence displayed. Indeed cDNAs do not encode a Gly that could serve as substrate for peptide alpha-amidation. Expressed by the venom gland. Not expressed in the pancreas, liver, stomach, small intestine, lung, heart, kidney, spleen, ovary, and brain.

The protein localises to the secreted. Functionally, has vasoactive intestinal peptide(VIP)/secretin-like biological activity. Interacts with rat and human VIP receptors 1 (VIPR1) and 2 (VIPR2), with the highest affinity for the human VIPR2. Induces hypotension that is mediated by relaxation of cardiac smooth muscle. This vasodilation may not be transduced by VIP or PACAP receptors. The sequence is that of Exendin-2-long from Heloderma suspectum (Gila monster).